Consider the following 307-residue polypeptide: Methionyl-tRNA formyltransferase (307 aa).

108–111 contacts (6S)-5,6,7,8-tetrahydrofolate; sequence SLLP.

It belongs to the Fmt family.

It catalyses the reaction L-methionyl-tRNA(fMet) + (6R)-10-formyltetrahydrofolate = N-formyl-L-methionyl-tRNA(fMet) + (6S)-5,6,7,8-tetrahydrofolate + H(+). Attaches a formyl group to the free amino group of methionyl-tRNA(fMet). The formyl group appears to play a dual role in the initiator identity of N-formylmethionyl-tRNA by promoting its recognition by IF2 and preventing the misappropriation of this tRNA by the elongation apparatus. The polypeptide is Methionyl-tRNA formyltransferase (Xanthomonas euvesicatoria pv. vesicatoria (strain 85-10) (Xanthomonas campestris pv. vesicatoria)).